Reading from the N-terminus, the 348-residue chain is Interferon regulatory factor 2 (348 aa).

Residues 5 to 113 (RMRMRPWLEE…NAFRVYRMLP (109 aa)) constitute a DNA-binding region (IRF tryptophan pentad repeat). N6-acetyllysine occurs at positions 75 and 78. Positions 117-137 (RPSKKGKKTKSEKDDKFKQIK) are disordered. Basic and acidic residues predominate over residues 125-137 (TKSEKDDKFKQIK). Residues K137, K164, and K291 each participate in a glycyl lysine isopeptide (Lys-Gly) (interchain with G-Cter in SUMO) cross-link. A disordered region spans residues 311-348 (LPQVVSTASTSSSRPDRETRASVIKKTSDITQSRVKSC). Polar residues-rich tracts occupy residues 314–323 (VVSTASTSSS) and 339–348 (DITQSRVKSC).

Belongs to the IRF family. In terms of assembly, interacts with CREBBP in growing cells; the interaction acetylates IRF2 and regulates IRF2-dependent H4 promoter activity.

The protein localises to the nucleus. In terms of biological role, specifically binds to the upstream regulatory region of type I IFN and IFN-inducible MHC class I genes (the interferon consensus sequence (ICS)) and represses those genes. Also acts as an activator for several genes including H4 and IL7. Constitutively binds to the ISRE promoter to activate IL7. Involved in cell cycle regulation through binding the site II (HiNF-M) promoter region of H4 and activating transcription during cell growth. Antagonizes IRF1 transcriptional activation. This chain is Interferon regulatory factor 2 (IRF2), found in Gallus gallus (Chicken).